The sequence spans 396 residues: L-lactate dehydrogenase (396 aa).

An FMN hydroxy acid dehydrogenase domain is found at 1 to 380 (MIISAASDYR…SGDSLVQELG (380 aa)). Tyr24 contributes to the substrate binding site. 2 residues coordinate FMN: Ser106 and Gln127. Tyr129 serves as a coordination point for substrate. Thr155 is a binding site for FMN. Arg164 contacts substrate. Residue Lys251 coordinates FMN. His275 (proton acceptor) is an active-site residue. Arg278 serves as a coordination point for substrate. 306-330 (DSGIRNGLDVVRMIALGADTVLLGR) is an FMN binding site.

Belongs to the FMN-dependent alpha-hydroxy acid dehydrogenase family. It depends on FMN as a cofactor.

It localises to the cell inner membrane. It carries out the reaction (S)-lactate + A = pyruvate + AH2. In terms of biological role, catalyzes the conversion of L-lactate to pyruvate. Is coupled to the respiratory chain. The protein is L-lactate dehydrogenase of Salmonella paratyphi C (strain RKS4594).